The sequence spans 172 residues: WW domain binding protein VOPP1 (172 aa).

The N-terminal stretch at 1–22 (MRRQPAKVAALLLGLLLECTEA) is a signal peptide. Over 23–60 (KKHCWYFEGLYPTYYICRSYEDCCGSRCCVRALSIQRL) the chain is Extracellular. A helical transmembrane segment spans residues 61 to 81 (WYFWFLLMMGVLFCCGAGFFI). The Cytoplasmic segment spans residues 82–172 (RRRMYPPPLI…PPYEQVVKAK (91 aa)). Positions 102–153 (RQPPNPGPGAQQPGPPYYTDPGGPGMNPVGNSMAMAFQVPPNSPQGSVACPP) are disordered. A compositionally biased stretch (pro residues) spans 104-119 (PPNPGPGAQQPGPPYY).

This sequence belongs to the VOPP1/ECOP family. In terms of assembly, interacts with WWOX (via WW domain). Widely expressed with highest levels in thymus and ovary.

It localises to the cytoplasmic vesicle membrane. It is found in the late endosome membrane. The protein localises to the lysosome membrane. Increases the transcriptional activity of NFKB1 by facilitating its nuclear translocation, DNA-binding and associated apoptotic response, when overexpressed. May sequester WWOX in lysosomal vesicles and thereby regulate WWOX role as tumor suppressor. In Homo sapiens (Human), this protein is WW domain binding protein VOPP1.